We begin with the raw amino-acid sequence, 602 residues long: Adenylosuccinate synthetase (602 aa).

Residues 74 to 80 and 104 to 106 each bind GTP; these read GDEGKGK and GHT. The active-site Proton acceptor is the D75. Residues D75 and G104 each contribute to the Mg(2+) site. IMP is bound by residues 75–78, 102–105, T189, K203, Q315, T331, and K459; these read DEGK and NAGH. Catalysis depends on H105, which acts as the Proton donor. 455–461 provides a ligand contact to substrate; it reads AVTKKPR. GTP contacts are provided by residues R461 and 589–591; that span reads GNG.

Belongs to the adenylosuccinate synthetase family. As to quaternary structure, homodimer. Mg(2+) serves as cofactor.

Its subcellular location is the cytoplasm. The enzyme catalyses IMP + L-aspartate + GTP = N(6)-(1,2-dicarboxyethyl)-AMP + GDP + phosphate + 2 H(+). It participates in purine metabolism; AMP biosynthesis via de novo pathway; AMP from IMP: step 1/2. In terms of biological role, plays an important role in the salvage pathway for purine nucleotide biosynthesis. Catalyzes the first committed step in the biosynthesis of AMP from IMP. This chain is Adenylosuccinate synthetase, found in Trypanosoma brucei brucei (strain 927/4 GUTat10.1).